Reading from the N-terminus, the 271-residue chain is Glutamate racemase (271 aa).

Substrate is bound by residues 12–13 (DS) and 44–45 (YG). C75 serves as the catalytic Proton donor/acceptor. Position 76-77 (76-77 (NS)) interacts with substrate. The active-site Proton donor/acceptor is C185. A substrate-binding site is contributed by 186–187 (TH).

This sequence belongs to the aspartate/glutamate racemases family.

It carries out the reaction L-glutamate = D-glutamate. The protein operates within cell wall biogenesis; peptidoglycan biosynthesis. Functionally, provides the (R)-glutamate required for cell wall biosynthesis. The sequence is that of Glutamate racemase from Mycobacterium bovis (strain ATCC BAA-935 / AF2122/97).